A 187-amino-acid polypeptide reads, in one-letter code: Accessory gene regulator protein B (187 aa).

A run of 5 helical transmembrane segments spans residues 49-69 (ISIF…YMLI), 82-102 (ILCY…LINI), 106-126 (FTYL…YAPA), 144-164 (LSII…PFYA), and 166-186 (FMLL…FPKE).

Belongs to the AgrB family.

It is found in the cell membrane. Its function is as follows. Essential for the production of a quorum sensing system signal molecule, the autoinducing peptide (AIP). This quorum sensing system is responsible for the regulation of the expression of virulence factor genes. Involved in the proteolytic processing of AgrD, the precursor of AIP. The protein is Accessory gene regulator protein B of Staphylococcus aureus (strain Mu50 / ATCC 700699).